Here is a 101-residue protein sequence, read N- to C-terminus: Small ribosomal subunit protein bS18c (101 aa).

The segment covering M1–L19 has biased composition (basic residues). The segment at M1–G23 is disordered.

Belongs to the bacterial ribosomal protein bS18 family. As to quaternary structure, part of the 30S ribosomal subunit.

The protein localises to the plastid. Its subcellular location is the chloroplast. The polypeptide is Small ribosomal subunit protein bS18c (Liriodendron tulipifera (Tuliptree)).